Reading from the N-terminus, the 327-residue chain is Interleukin-12 subunit beta (327 aa).

The N-terminal stretch at 1–22 (MCLQQLVISWVSLVWLASPLLA) is a signal peptide. Residues 23-106 (IWELEKNVYV…LSQMLLLLHK (84 aa)) enclose the Ig-like C2-type domain. Residues C50 and C90 are joined by a disulfide bond. N134 and N152 each carry an N-linked (GlcNAc...) asparagine glycan. Residues 237–327 (PPKNLKMKPS…WSEWATMSCP (91 aa)) enclose the Fibronectin type-III domain.

The protein belongs to the IL-12B family. Heterodimer with IL12A; disulfide-linked. The heterodimer is known as interleukin IL-12. Heterodimer with IL23A; disulfide-linked. The heterodimer is known as interleukin IL-23. Also secreted as a monomer. Interacts with NBR1; this interaction promotes IL-12 secretion.

The protein localises to the secreted. Its function is as follows. Cytokine that can act as a growth factor for activated T and NK cells, enhance the lytic activity of NK/lymphokine-activated killer cells, and stimulate the production of IFN-gamma by resting PBMC. Functionally, associates with IL23A to form the IL-23 interleukin, a heterodimeric cytokine which functions in innate and adaptive immunity. IL-23 may constitute with IL-17 an acute response to infection in peripheral tissues. IL-23 binds to a heterodimeric receptor complex composed of IL12RB1 and IL23R, activates the Jak-Stat signaling cascade, stimulates memory rather than naive T-cells and promotes production of pro-inflammatory cytokines. IL-23 induces autoimmune inflammation and thus may be responsible for autoimmune inflammatory diseases and may be important for tumorigenesis. This Marmota monax (Woodchuck) protein is Interleukin-12 subunit beta (IL12B).